The sequence spans 674 residues: Ribonuclease E (674 aa).

The 83-residue stretch at 35-117 (GDIYLGLVDN…LTGNISMPGR (83 aa)) folds into the S1 motif domain. Positions 296 and 339 each coordinate Mg(2+). 2 residues coordinate Zn(2+): C397 and C400. 2 disordered regions span residues 458 to 529 (PLDL…RRVE) and 626 to 674 (QPRE…SSAE). 2 stretches are compositionally biased toward basic and acidic residues: residues 484-493 (GSEFSEKENI) and 509-529 (TKEKVTGTAPPRRERPSRRVE). The segment covering 663 to 674 (RPGRRRRRSSAE) has biased composition (basic residues). Positions 665 to 673 (GRRRRRSSA) match the C4 Arg-rich motif, probably responsible for interaction with PNPase motif.

Belongs to the RNase E/G family. Fractionates in a 250-300 kDa region, which is too small to be the equivalent of an RNA degradosome, as occurs with E.coli RNase E. Interacts with polynucleotide phosphorylase (PNPase, pnp), probably via the C4 Arg-rich motif (residues 665-673). Requires Mg(2+) as cofactor.

Its subcellular location is the cytoplasm. It is found in the cell inner membrane. The catalysed reaction is Endonucleolytic cleavage of single-stranded RNA in A- and U-rich regions.. Endoribonuclease that plays a central role in rRNA processing and mRNA decay, and probably tRNA processing. Acts on 9S rRNA (the precursor of 5S rRNA) and RNAI, a molecule that controls the replication of ColE1 plasmid. Upon expression in E.coli does not purify with endogenous degradosome proteins. Prefers 5'-monophosphorylated substrates over 5'-triphosphorylated substrates. Complements an rne temperature-sensitive mutation in E.coli, despite being considerably shorter and not able to interact with the E.coli degradosome. Cleaves AU-rich sequences in vitro, tested with psbA2 mRNA. Complements both an rne temperature-sensitive mutation and an rng deletion in E.coli. Acts in the degradation of psaL mRNA in the presence but not the absence of the sRNA PsrR1. Cleaves the rimO-crhR transcript, contributing to the very short half-life of rimO mRNA. In terms of biological role, mRNA for psbA2, one of the core proteins in photosystem II, is degraded in the dark under control of a cis-acting AU-rich box in its 5'-UTR. RNase E cuts in this box, suggesting it is involved in this dark-induced mRNA instability. Its function is as follows. CRISPR (clustered regularly interspaced short palindromic repeat) is an adaptive immune system that provides protection against mobile genetic elements (viruses, transposable elements and conjugative plasmids). CRISPR clusters contain spacers, sequences complementary to antecedent mobile elements, and target invading nucleic acids. CRISPR clusters are transcribed and processed into CRISPR RNA (crRNA). Endogenous RNase E is required for correct processing of pre-crRNA for the CRISPR3 subtype III-B system in this genome (genes sll7080 to sll7095). This CRISPR3 system does not include a cas6 gene, which is the usual RNase involved in crRNA maturation. This Synechocystis sp. (strain ATCC 27184 / PCC 6803 / Kazusa) protein is Ribonuclease E.